The chain runs to 763 residues: Amine oxidase [copper-containing] 3 (763 aa).

At 1–5 (MNQKT) the chain is on the cytoplasmic side. Residues 6 to 26 (ILVLLILAVITIFALVCVLLV) form a helical; Signal-anchor for type II membrane protein membrane-spanning segment. Topologically, residues 27–763 (GRGGDGGEPS…AFSHGGFSHN (737 aa)) are extracellular. Ser-43 is a glycosylation site (O-linked (GalNAc...) serine). N-linked (GlcNAc...) asparagine glycosylation occurs at Asn-137. Residues Cys-198 and Cys-199 are joined by a disulfide bond. Thr-212 carries O-linked (GalNAc...) threonine glycosylation. Residues Asn-232 and Asn-294 are each glycosylated (N-linked (GlcNAc...) asparagine). The active-site Proton acceptor is the Asp-386. Residues Cys-404 and Cys-430 are joined by a disulfide bond. Tyr-471 acts as the Schiff-base intermediate with substrate; via topaquinone in catalysis. Tyr-471 bears the 2',4',5'-topaquinone mark. Cu(2+) contacts are provided by His-520 and His-522. Ca(2+)-binding residues include Asp-529, Leu-530, Asp-531, and Glu-572. Asn-592 is a glycosylation site (N-linked (GlcNAc...) (complex) asparagine). Asn-618 carries N-linked (GlcNAc...) asparagine glycosylation. Positions 641, 663, and 665 each coordinate Ca(2+). Asn-666 is a glycosylation site (N-linked (GlcNAc...) asparagine). Ca(2+) contacts are provided by Glu-667, Asp-673, and Leu-674. Residue Thr-679 is glycosylated (O-linked (GlcNAc) threonine). His-684 is a Cu(2+) binding site. A disulfide bridge links Cys-734 with Cys-741.

It belongs to the copper/topaquinone oxidase family. In terms of assembly, homodimer; disulfide-linked. Can heterodimerize with isoform 2 leading to reduced surface expression. Probably forms heterodimers with AOC2. Requires Cu(2+) as cofactor. The cofactor is Ca(2+). L-topaquinone serves as cofactor. Post-translationally, topaquinone (TPQ) is generated by copper-dependent autoxidation of a specific tyrosyl residue. N- and O-glycosylated. In terms of tissue distribution, strongly expressed on the high endothelial venules of peripheral lymph nodes and on hepatic endothelia. Also highly expressed in appendix, lung and small intestine. Expressed also in adipose tissue, in bone marrow, colon, heart, kidney, ovary, pancreas, placenta, prostate, skeletal muscle, spleen and testis. Isoform 2 seems to be the predominant transcript in fetal kidneys, fetal cartilage and fetal tonsils. The highest relative expression of isoform 2 occurs in skeletal muscle, heart, pancreas, kidney, and lung.

It is found in the cell membrane. The catalysed reaction is methylamine + O2 + H2O = formaldehyde + H2O2 + NH4(+). It catalyses the reaction benzylamine + O2 + H2O = benzaldehyde + H2O2 + NH4(+). It carries out the reaction 2-phenylethylamine + O2 + H2O = 2-phenylacetaldehyde + H2O2 + NH4(+). In terms of biological role, catalyzes the oxidative deamination of primary amines to the corresponding aldehydes with the concomitant production of hydrogen peroxide and ammonia. Has a preference for the primary monoamines methylamine and benzylamine. Could also act on 2-phenylethylamine but much less efficiently. At endothelial cells surface can also function as a cell adhesion protein that participates in lymphocyte extravasation and recirculation by mediating the binding of lymphocytes to peripheral lymph node vascular endothelial cells in an L-selectin-independent fashion. Its function is as follows. Has no semicarbazide-sensitive amine oxidase (SSAO) activity. In Homo sapiens (Human), this protein is Amine oxidase [copper-containing] 3.